A 252-amino-acid chain; its full sequence is Probable transcriptional regulatory protein DSY2470 (252 aa).

The protein belongs to the TACO1 family.

Its subcellular location is the cytoplasm. In Desulfitobacterium hafniense (strain Y51), this protein is Probable transcriptional regulatory protein DSY2470.